Here is a 100-residue protein sequence, read N- to C-terminus: Large ribosomal subunit protein eL21 (100 aa).

It belongs to the eukaryotic ribosomal protein eL21 family.

The protein is Large ribosomal subunit protein eL21 of Pyrobaculum arsenaticum (strain DSM 13514 / JCM 11321 / PZ6).